Consider the following 409-residue polypeptide: Methylthioribose-1-phosphate isomerase (409 aa).

Aspartate 277 functions as the Proton donor in the catalytic mechanism.

Belongs to the eIF-2B alpha/beta/delta subunits family. MtnA subfamily.

The protein localises to the cytoplasm. It is found in the nucleus. It catalyses the reaction 5-(methylsulfanyl)-alpha-D-ribose 1-phosphate = 5-(methylsulfanyl)-D-ribulose 1-phosphate. It participates in amino-acid biosynthesis; L-methionine biosynthesis via salvage pathway; L-methionine from S-methyl-5-thio-alpha-D-ribose 1-phosphate: step 1/6. Catalyzes the interconversion of methylthioribose-1-phosphate (MTR-1-P) into methylthioribulose-1-phosphate (MTRu-1-P). The chain is Methylthioribose-1-phosphate isomerase from Scheffersomyces stipitis (strain ATCC 58785 / CBS 6054 / NBRC 10063 / NRRL Y-11545) (Yeast).